Here is a 100-residue protein sequence, read N- to C-terminus: Urease subunit gamma (100 aa).

The protein belongs to the urease gamma subunit family. As to quaternary structure, heterotrimer of UreA (gamma), UreB (beta) and UreC (alpha) subunits. Three heterotrimers associate to form the active enzyme.

It is found in the cytoplasm. It carries out the reaction urea + 2 H2O + H(+) = hydrogencarbonate + 2 NH4(+). It participates in nitrogen metabolism; urea degradation; CO(2) and NH(3) from urea (urease route): step 1/1. In Pseudoalteromonas translucida (strain TAC 125), this protein is Urease subunit gamma.